Here is a 328-residue protein sequence, read N- to C-terminus: Malate dehydrogenase (328 aa).

12–18 serves as a coordination point for NAD(+); the sequence is GAAGQIG. Substrate-binding residues include Arg-95 and Arg-101. Residues Asn-108, Gln-115, and 132–134 each bind NAD(+); that span reads VGN. Residues Asn-134 and Arg-165 each contribute to the substrate site. Residue His-190 is the Proton acceptor of the active site.

Belongs to the LDH/MDH superfamily. MDH type 2 family.

The enzyme catalyses (S)-malate + NAD(+) = oxaloacetate + NADH + H(+). In terms of biological role, catalyzes the reversible oxidation of malate to oxaloacetate. This Paracidovorax citrulli (strain AAC00-1) (Acidovorax citrulli) protein is Malate dehydrogenase.